A 248-amino-acid polypeptide reads, in one-letter code: Ubiquinone/menaquinone biosynthesis C-methyltransferase UbiE (248 aa).

S-adenosyl-L-methionine is bound by residues Ser-68 and Asp-92.

It belongs to the class I-like SAM-binding methyltransferase superfamily. MenG/UbiE family.

It carries out the reaction a 2-demethylmenaquinol + S-adenosyl-L-methionine = a menaquinol + S-adenosyl-L-homocysteine + H(+). It catalyses the reaction a 2-methoxy-6-(all-trans-polyprenyl)benzene-1,4-diol + S-adenosyl-L-methionine = a 5-methoxy-2-methyl-3-(all-trans-polyprenyl)benzene-1,4-diol + S-adenosyl-L-homocysteine + H(+). Its pathway is quinol/quinone metabolism; menaquinone biosynthesis; menaquinol from 1,4-dihydroxy-2-naphthoate: step 2/2. It functions in the pathway cofactor biosynthesis; ubiquinone biosynthesis. In terms of biological role, methyltransferase required for the conversion of demethylmenaquinol (DMKH2) to menaquinol (MKH2) and the conversion of 2-polyprenyl-6-methoxy-1,4-benzoquinol (DDMQH2) to 2-polyprenyl-3-methyl-6-methoxy-1,4-benzoquinol (DMQH2). The polypeptide is Ubiquinone/menaquinone biosynthesis C-methyltransferase UbiE (Rickettsia conorii (strain ATCC VR-613 / Malish 7)).